A 98-amino-acid chain; its full sequence is Large ribosomal subunit protein uL23 (98 aa).

It belongs to the universal ribosomal protein uL23 family. In terms of assembly, part of the 50S ribosomal subunit. Contacts protein L29, and trigger factor when it is bound to the ribosome.

One of the early assembly proteins it binds 23S rRNA. One of the proteins that surrounds the polypeptide exit tunnel on the outside of the ribosome. Forms the main docking site for trigger factor binding to the ribosome. This chain is Large ribosomal subunit protein uL23, found in Bordetella petrii (strain ATCC BAA-461 / DSM 12804 / CCUG 43448).